The sequence spans 439 residues: Xaa-Pro dipeptidase (439 aa).

Positions 244, 255, 335, 380, and 419 each coordinate Mn(2+).

It belongs to the peptidase M24B family. Bacterial-type prolidase subfamily. Mn(2+) is required as a cofactor.

The catalysed reaction is Xaa-L-Pro dipeptide + H2O = an L-alpha-amino acid + L-proline. Its function is as follows. Splits dipeptides with a prolyl residue in the C-terminal position. The chain is Xaa-Pro dipeptidase from Shewanella woodyi (strain ATCC 51908 / MS32).